We begin with the raw amino-acid sequence, 402 residues long: FMN-dependent alpha-hydroxy acid dehydrogenase qulF (402 aa).

The region spanning 22–394 (RLPAITTNPT…NRDCMRRISY (373 aa)) is the FMN hydroxy acid dehydrogenase domain. A 2-oxocarboxylate is bound at residue Y48. The FMN site is built by S130 and Q152. A 2-oxocarboxylate is bound by residues Y154 and R189. K265 is an FMN binding site. H289 serves as the catalytic Proton acceptor. A 2-oxocarboxylate is bound at residue R292. FMN is bound by residues 320–324 (DSGVR) and 343–344 (GR).

Belongs to the FMN-dependent alpha-hydroxy acid dehydrogenase family. It depends on FMN as a cofactor.

Functionally, FMN-dependent alpha-hydroxy acid dehydrogenase; part of the gene cluster that mediates the biosynthesis of quinolactacin A2 (QUL A2), a fungal alkaloid that features a quinolone-gamma-lactam hybrid, which is a potential pharmacophore for the treatment of cancer and Alzheimer's disease. The quinolone-gamma-lactam hybrid scaffold is synthesized from the combination of L-isoleucine (L-Ile) and the nonproteinogenic amino acid L-kynurenine, followed by quinolone cyclization, oxidative decarboxylation, and lactam formation. Additionally, the N-methyl group is derived from methionine, which might be catalyzed by an S-adenosylmethionine (SAM)-dependent methyltransferase. Bioconversion of L-tryptophan to L-kynurenine could be catalyzed by the indoleamine-2,3-dioxygenase (IDO) qulI to produce an unstable product, N-formyl-L-kynurenine, followed by kynurenine formamidase catalyzed hydrolysis. QulM then acts as a methyltransferase that methylates L-kynurenine at the N-4 position. The FMN-dependent alpha-hydroxy acid dehydrogenase qulF than functions as an oxidative decarboxylase which converts N-methylkynurenine into 2-aminobenzoylacetamide via 2 tandem reactions, including dehydrogenation and decarboxylation. An amidase located outside of the qul gene cluster further produces the unstable beta-keto acid precursor N-methyl-2-aminobenzoylacetate, which could be spontaneously dehydrated to form N-methyl-4-hydroxy-2-quinolone. The NRPS qulB is able to incorporate N-methyl-2-aminobenzoylacetate and efficiently compete with the spontaneous reaction. By further extending the beta-keto acid with L-Ile, qulA performs a Dieckmann condensation to form the gamma-lactam ring and release a 4-ketopyrrolidinone intermediate from the assembly line. This intermediate could plausibly further undergo a spontaneous cyclization to yield the final quinolone-gamma-lactam hybrid structure. In Penicillium citrinum, this protein is FMN-dependent alpha-hydroxy acid dehydrogenase qulF.